The following is a 431-amino-acid chain: Adenylosuccinate synthetase (431 aa).

GTP contacts are provided by residues 21–27 (GDEGKGK) and 49–51 (GHT). The active-site Proton acceptor is the D22. Mg(2+) is bound by residues D22 and G49. Residues 22–25 (DEGK), 47–50 (NAGH), T138, R152, N230, T245, and R309 contribute to the IMP site. The active-site Proton donor is H50. 305 to 311 (ATTGRPR) contributes to the substrate binding site. GTP contacts are provided by residues R311, 337-339 (KLD), and 419-421 (GNG).

Belongs to the adenylosuccinate synthetase family. In terms of assembly, homodimer. Mg(2+) is required as a cofactor.

It is found in the cytoplasm. It catalyses the reaction IMP + L-aspartate + GTP = N(6)-(1,2-dicarboxyethyl)-AMP + GDP + phosphate + 2 H(+). Its pathway is purine metabolism; AMP biosynthesis via de novo pathway; AMP from IMP: step 1/2. Its function is as follows. Plays an important role in the de novo pathway and in the salvage pathway of purine nucleotide biosynthesis. Catalyzes the first committed step in the biosynthesis of AMP from IMP. The polypeptide is Adenylosuccinate synthetase (Paramecium tetraurelia).